Consider the following 195-residue polypeptide: Ribosome maturation factor RimM (195 aa).

The PRC barrel domain occupies 101 to 191 (ADEWYPKDLI…YLTLDPPGGL (91 aa)).

It belongs to the RimM family. Binds ribosomal protein uS19.

It localises to the cytoplasm. An accessory protein needed during the final step in the assembly of 30S ribosomal subunit, possibly for assembly of the head region. Essential for efficient processing of 16S rRNA. May be needed both before and after RbfA during the maturation of 16S rRNA. It has affinity for free ribosomal 30S subunits but not for 70S ribosomes. This Bifidobacterium adolescentis (strain ATCC 15703 / DSM 20083 / NCTC 11814 / E194a) protein is Ribosome maturation factor RimM.